The primary structure comprises 397 residues: 1-deoxy-D-xylulose 5-phosphate reductoisomerase (397 aa).

Residues Thr-12, Gly-13, Ser-14, Ile-15, Gly-38, Lys-39, Asn-40, and Asn-126 each contribute to the NADPH site. Lys-127 is a binding site for 1-deoxy-D-xylulose 5-phosphate. Glu-128 provides a ligand contact to NADPH. Asp-152 contacts Mn(2+). 4 residues coordinate 1-deoxy-D-xylulose 5-phosphate: Ser-153, Glu-154, Ser-188, and His-211. Glu-154 provides a ligand contact to Mn(2+). Gly-217 is an NADPH binding site. Residues Ser-224, Asn-229, Lys-230, and Glu-233 each coordinate 1-deoxy-D-xylulose 5-phosphate. Glu-233 contacts Mn(2+).

Belongs to the DXR family. Mg(2+) is required as a cofactor. The cofactor is Mn(2+).

The enzyme catalyses 2-C-methyl-D-erythritol 4-phosphate + NADP(+) = 1-deoxy-D-xylulose 5-phosphate + NADPH + H(+). Its pathway is isoprenoid biosynthesis; isopentenyl diphosphate biosynthesis via DXP pathway; isopentenyl diphosphate from 1-deoxy-D-xylulose 5-phosphate: step 1/6. In terms of biological role, catalyzes the NADPH-dependent rearrangement and reduction of 1-deoxy-D-xylulose-5-phosphate (DXP) to 2-C-methyl-D-erythritol 4-phosphate (MEP). This Haemophilus influenzae (strain ATCC 51907 / DSM 11121 / KW20 / Rd) protein is 1-deoxy-D-xylulose 5-phosphate reductoisomerase.